We begin with the raw amino-acid sequence, 329 residues long: Ribosomal RNA small subunit methyltransferase H (329 aa).

Residues 39 to 41 (GGY), D56, F85, D106, and Q113 contribute to the S-adenosyl-L-methionine site. The segment at 289-308 (SGAIRPTPEEEARNPRARSA) is disordered.

This sequence belongs to the methyltransferase superfamily. RsmH family.

The protein resides in the cytoplasm. The enzyme catalyses cytidine(1402) in 16S rRNA + S-adenosyl-L-methionine = N(4)-methylcytidine(1402) in 16S rRNA + S-adenosyl-L-homocysteine + H(+). Specifically methylates the N4 position of cytidine in position 1402 (C1402) of 16S rRNA. This Novosphingobium aromaticivorans (strain ATCC 700278 / DSM 12444 / CCUG 56034 / CIP 105152 / NBRC 16084 / F199) protein is Ribosomal RNA small subunit methyltransferase H.